Here is an 815-residue protein sequence, read N- to C-terminus: Patatin-like phospholipase domain-containing protein LELG_00944 (815 aa).

Positions 41–50 (VSTTAPTTPL) are enriched in polar residues. Disordered regions lie at residues 41–105 (VSTT…PQLK) and 140–166 (SENL…STSP). Low complexity predominate over residues 54 to 73 (LDMGDLSLLGGELGNGSDDV). The segment covering 74–94 (VVGDDDDDDDDDDDDDDDDDD) has biased composition (acidic residues). Basic residues predominate over residues 148 to 160 (KRTKFAKSSKSSK). A helical membrane pass occupies residues 185-205 (WPILTFVVIWVTILGFLYLAV). In terms of domain architecture, PNPLA spans 360-552 (LCLSGGACFA…RTDIPIDALN (193 aa)). Residues 391-395 (GTSGG) carry the GXSXG motif. The active-site Nucleophile is the serine 393. Residue aspartate 539 is the Proton acceptor of the active site. Residues 753 to 815 (GSTLRDDDAD…LTKERRHTVY (63 aa)) form a disordered region. Acidic residues predominate over residues 759-799 (DDADADVDEDDNEDEDEEDEDENDYEEYDVEDLDDPYESDA).

It belongs to the PLPL family.

The protein resides in the membrane. Probable lipid hydrolase. This chain is Patatin-like phospholipase domain-containing protein LELG_00944, found in Lodderomyces elongisporus (strain ATCC 11503 / CBS 2605 / JCM 1781 / NBRC 1676 / NRRL YB-4239) (Yeast).